A 281-amino-acid polypeptide reads, in one-letter code: INSIG family protein (281 aa).

Residues 1-93 (MSRKEIYEPR…FIDYSSLITF (93 aa)) are Cytoplasmic-facing. Position 28 is a phosphoserine (S28). The helical transmembrane segment at 94–120 (FCKLCVIFGLGFVFTYLAEQIVQDAKL) threads the bilayer. Residues 121–134 (PLLTVNLKSWKFEP) lie on the Lumenal side of the membrane. A helical membrane pass occupies residues 135–159 (PWPAIFGFVAVILGLSYRRMDTKYP). Residues 160–170 (LGAAPLRPSQS) lie on the Cytoplasmic side of the membrane. A helical membrane pass occupies residues 171–186 (SKWQWISRYLAAFATL). Residues 187-189 (LLS) lie on the Lumenal side of the membrane. The helical transmembrane segment at 190–215 (MKKLLFISNSHSIVALVASSASIWYI) threads the bilayer. The Cytoplasmic segment spans residues 216–221 (FDRSRN). Residues 222–256 (GIILSTITSVLGSILYYNLVDTSKIELNGVEFPEI) form a helical membrane-spanning segment. The Lumenal segment spans residues 257-260 (QFRL). Residues 261-281 (WIPMILFSASTIVGNAGRLLF) traverse the membrane as a helical segment.

This sequence belongs to the INSIG family.

The protein localises to the endoplasmic reticulum membrane. This is INSIG family protein (ins1) from Schizosaccharomyces pombe (strain 972 / ATCC 24843) (Fission yeast).